The primary structure comprises 84 residues: Small ribosomal subunit protein bS18A (84 aa).

This sequence belongs to the bacterial ribosomal protein bS18 family. As to quaternary structure, part of the 30S ribosomal subunit. Forms a tight heterodimer with protein bS6.

Functionally, binds as a heterodimer with protein bS6 to the central domain of the 16S rRNA, where it helps stabilize the platform of the 30S subunit. The protein is Small ribosomal subunit protein bS18A of Frankia alni (strain DSM 45986 / CECT 9034 / ACN14a).